Reading from the N-terminus, the 427-residue chain is Glutamate-1-semialdehyde 2,1-aminomutase (427 aa).

Lys268 bears the N6-(pyridoxal phosphate)lysine mark.

This sequence belongs to the class-III pyridoxal-phosphate-dependent aminotransferase family. HemL subfamily. Pyridoxal 5'-phosphate serves as cofactor.

Its subcellular location is the cytoplasm. The catalysed reaction is (S)-4-amino-5-oxopentanoate = 5-aminolevulinate. Its pathway is porphyrin-containing compound metabolism; protoporphyrin-IX biosynthesis; 5-aminolevulinate from L-glutamyl-tRNA(Glu): step 2/2. The chain is Glutamate-1-semialdehyde 2,1-aminomutase from Methanococcus vannielii (strain ATCC 35089 / DSM 1224 / JCM 13029 / OCM 148 / SB).